A 468-amino-acid chain; its full sequence is ATP synthase subunit beta (468 aa).

Residue glycine 155–threonine 162 coordinates ATP.

It belongs to the ATPase alpha/beta chains family. As to quaternary structure, F-type ATPases have 2 components, CF(1) - the catalytic core - and CF(0) - the membrane proton channel. CF(1) has five subunits: alpha(3), beta(3), gamma(1), delta(1), epsilon(1). CF(0) has three main subunits: a(1), b(2) and c(9-12). The alpha and beta chains form an alternating ring which encloses part of the gamma chain. CF(1) is attached to CF(0) by a central stalk formed by the gamma and epsilon chains, while a peripheral stalk is formed by the delta and b chains.

It localises to the cell membrane. It carries out the reaction ATP + H2O + 4 H(+)(in) = ADP + phosphate + 5 H(+)(out). Functionally, produces ATP from ADP in the presence of a proton gradient across the membrane. The catalytic sites are hosted primarily by the beta subunits. The chain is ATP synthase subunit beta from Streptococcus thermophilus (strain CNRZ 1066).